Here is a 281-residue protein sequence, read N- to C-terminus: Octanoyl-[GcvH]:protein N-octanoyltransferase (281 aa).

The 207-residue stretch at 44–250 folds into the BPL/LPL catalytic domain; sequence GESAATMRSW…TLQQFAPKLT (207 aa). C149 functions as the Acyl-thioester intermediate in the catalytic mechanism.

Belongs to the octanoyltransferase LipL family.

It carries out the reaction N(6)-octanoyl-L-lysyl-[glycine-cleavage complex H protein] + L-lysyl-[lipoyl-carrier protein] = N(6)-octanoyl-L-lysyl-[lipoyl-carrier protein] + L-lysyl-[glycine-cleavage complex H protein]. Its pathway is protein modification; protein lipoylation via endogenous pathway; protein N(6)-(lipoyl)lysine from octanoyl-[acyl-carrier-protein]. Functionally, catalyzes the amidotransfer (transamidation) of the octanoyl moiety from octanoyl-GcvH to the lipoyl domain of the E2 subunit of lipoate-dependent enzymes. In Bacillus anthracis, this protein is Octanoyl-[GcvH]:protein N-octanoyltransferase.